The sequence spans 311 residues: Methionyl-tRNA formyltransferase (311 aa).

112–115 (SLLP) is a binding site for (6S)-5,6,7,8-tetrahydrofolate.

This sequence belongs to the Fmt family.

It carries out the reaction L-methionyl-tRNA(fMet) + (6R)-10-formyltetrahydrofolate = N-formyl-L-methionyl-tRNA(fMet) + (6S)-5,6,7,8-tetrahydrofolate + H(+). Attaches a formyl group to the free amino group of methionyl-tRNA(fMet). The formyl group appears to play a dual role in the initiator identity of N-formylmethionyl-tRNA by promoting its recognition by IF2 and preventing the misappropriation of this tRNA by the elongation apparatus. This Bartonella henselae (strain ATCC 49882 / DSM 28221 / CCUG 30454 / Houston 1) (Rochalimaea henselae) protein is Methionyl-tRNA formyltransferase.